A 2832-amino-acid polypeptide reads, in one-letter code: Cyclic beta-(1,2)-glucan synthase NdvB (2832 aa).

A run of 7 helical transmembrane segments spans residues 411 to 431 (FAIA…VYAF), 444 to 464 (IMLL…FNTV), 810 to 830 (LIPV…EPTP), 831 to 851 (ALIW…LSLI), 880 to 900 (QVAL…DAIV), 938 to 958 (WTAP…DTGL), and 959 to 979 (PFIG…AWFV). Residues 1299-1506 (LASEARLTSL…NGQLREWFHA (208 aa)) form the Glycoamylase-like domain.

The protein belongs to the NdvB family.

The protein resides in the cell inner membrane. It catalyses the reaction [(1-&gt;2)-beta-D-glucosyl](n) + UDP-alpha-D-glucose = [(1-&gt;2)-beta-D-glucosyl](n+1) + UDP + H(+). Its function is as follows. Involved in the biosynthesis of cyclic beta-(1,2)-glucan. It seems that NdvB is involved in three enzymatic activities. First, it may catalyze the transfer of the first glucose from UDP-Glc to an unknown amino acid. In the second enzymatic activity (UDP-Glc:beta-(1,2) oligosaccharide glucosyltransferase), it may be responsible for chain elongation. Finally, in the third activity, it may catalyze glucan cyclization and release from the protein. NdvB is also involved in nodule invasion and in bacteroid development. The polypeptide is Cyclic beta-(1,2)-glucan synthase NdvB (Rhizobium meliloti (strain 1021) (Ensifer meliloti)).